The primary structure comprises 568 residues: PTS system lactose-specific EIICB component (568 aa).

In terms of domain architecture, PTS EIIC type-3 spans leucine 7–phenylalanine 409. A run of 9 helical transmembrane segments spans residues glycine 30–valine 50, isoleucine 62–glycine 82, isoleucine 103–proline 123, glycine 128–valine 148, phenylalanine 183–valine 203, glycine 222–histidine 242, phenylalanine 283–isoleucine 303, isoleucine 339–valine 359, and valine 389–phenylalanine 409. The PTS EIIB type-3 domain maps to glutamate 466–aspartate 568. The Phosphocysteine intermediate; for EIIB activity role is filled by cysteine 473. The residue at position 473 (cysteine 473) is a Phosphocysteine; by EIIA.

The protein resides in the cell membrane. The catalysed reaction is lactose(out) + N(pros)-phospho-L-histidyl-[protein] = lactose 6-phosphate(in) + L-histidyl-[protein]. Its function is as follows. The phosphoenolpyruvate-dependent sugar phosphotransferase system (sugar PTS), a major carbohydrate active transport system, catalyzes the phosphorylation of incoming sugar substrates concomitantly with their translocation across the cell membrane. The enzyme II LacEF PTS system is involved in lactose transport. In Lactococcus lactis subsp. lactis (Streptococcus lactis), this protein is PTS system lactose-specific EIICB component.